A 342-amino-acid polypeptide reads, in one-letter code: Foldase protein PrsA (342 aa).

The signal sequence occupies residues 1-22 (MVSVKKIVASALVGVLMFSAVG). The N-palmitoyl cysteine moiety is linked to residue Cys23. A lipid anchor (S-diacylglycerol cysteine) is attached at Cys23. Positions 190–284 (AKGVLARHLL…FGYHIIQAGA (95 aa)) constitute a PpiC domain.

Belongs to the PrsA family.

The protein localises to the cell membrane. The enzyme catalyses [protein]-peptidylproline (omega=180) = [protein]-peptidylproline (omega=0). Functionally, plays a major role in protein secretion by helping the post-translocational extracellular folding of several secreted proteins. The sequence is that of Foldase protein PrsA from Clostridium perfringens (strain SM101 / Type A).